The primary structure comprises 157 residues: Ribonuclease H (157 aa).

One can recognise an RNase H type-1 domain in the interval 5–146 (IMKQVEIFTD…CDDLARTAAE (142 aa)). Residues aspartate 14, glutamate 52, aspartate 74, and aspartate 138 each coordinate Mg(2+).

This sequence belongs to the RNase H family. Monomer. The cofactor is Mg(2+).

Its subcellular location is the cytoplasm. The enzyme catalyses Endonucleolytic cleavage to 5'-phosphomonoester.. Its function is as follows. Endonuclease that specifically degrades the RNA of RNA-DNA hybrids. In Aliivibrio salmonicida (strain LFI1238) (Vibrio salmonicida (strain LFI1238)), this protein is Ribonuclease H.